Reading from the N-terminus, the 415-residue chain is uncharacterized protein (415 aa).

The region spanning 1–52 is the TRAM domain; sequence MQDLTINAIGAQGDGLARTADGKPAFVPLTLPGEVVRAKMDGARGEVVEILA. C62, C68, C71, and C147 together coordinate [4Fe-4S] cluster. Residues Q252, Y279, E299, and D347 each coordinate S-adenosyl-L-methionine. Catalysis depends on C373, which acts as the Nucleophile.

Belongs to the class I-like SAM-binding methyltransferase superfamily. RNA M5U methyltransferase family.

This is an uncharacterized protein from Caulobacter vibrioides (strain ATCC 19089 / CIP 103742 / CB 15) (Caulobacter crescentus).